The primary structure comprises 153 residues: 3-hydroxyacyl-[acyl-carrier-protein] dehydratase FabZ (153 aa).

The active site involves histidine 54.

This sequence belongs to the thioester dehydratase family. FabZ subfamily.

It localises to the cytoplasm. The enzyme catalyses a (3R)-hydroxyacyl-[ACP] = a (2E)-enoyl-[ACP] + H2O. Its function is as follows. Involved in unsaturated fatty acids biosynthesis. Catalyzes the dehydration of short chain beta-hydroxyacyl-ACPs and long chain saturated and unsaturated beta-hydroxyacyl-ACPs. The chain is 3-hydroxyacyl-[acyl-carrier-protein] dehydratase FabZ from Shewanella pealeana (strain ATCC 700345 / ANG-SQ1).